We begin with the raw amino-acid sequence, 287 residues long: CRISPR-associated endoribonuclease Cas6 1 (287 aa).

It belongs to the CRISPR-associated endoribonuclease Cas6 family. Part of the aCascade ribonucleoprotein complex, minimally composed of Csa2 and Cas5a, which binds crRNA. Other possible components of aCascade in strain P1 are Cas6b (SSO1437) and Csa5 (SSO1443), while SSO1399, Cas5b (SSO1400) and SSO1401 have sometimes been seen weakly associated. Csa2 is probably the major RNA-binding subunit. The Csa2-Cas5a-crRNA complex also binds target DNA homologous to crRNA, probably forming an R-loop. Purified aCascade forms a filament about 6 nm in width.

CRISPR (clustered regularly interspaced short palindromic repeat) is an adaptive immune system that provides protection against mobile genetic elements (viruses, transposable elements and conjugative plasmids). CRISPR clusters contain spacers, sequences complementary to antecedent mobile elements, and target invading nucleic acids. CRISPR clusters are transcribed and processed into CRISPR RNA (crRNA). This chain is CRISPR-associated endoribonuclease Cas6 1 (cas6a), found in Saccharolobus solfataricus (strain ATCC 35092 / DSM 1617 / JCM 11322 / P2) (Sulfolobus solfataricus).